Here is a 569-residue protein sequence, read N- to C-terminus: Beta-galactoside-specific lectin 3 (569 aa).

A signal peptide spans 1–33 (MNAVMDSRGAWVSCFLILGLVFGATVKAETKFS). Residue E198 is part of the active site. 3 disulfide bridges follow: C280–C311, C327–C346, and C370–C387. Positions 288–307 (EVRYWPLVIRPVLENSGAVD) are cleaved as a propeptide — connecting peptide. The Ricin B-type lectin 1 domain maps to 314 to 441 (SEPTVRIVGR…YSLGQGWLAG (128 aa)). 329–331 (DVR) is a binding site for D-galactose. N-linked (GlcNAc...) asparagine glycans are attached at residues N402 and N442. Residues 445 to 568 (APREVTIYGF…GNPNQMWLPV (124 aa)) enclose the Ricin B-type lectin 2 domain. Disulfide bonds link C458/C471 and C497/C514. 541–543 (DVA) serves as a coordination point for D-galactose.

This sequence belongs to the ribosome-inactivating protein family. Type 2 RIP subfamily. Disulfide-linked dimer of A and B chains.

The enzyme catalyses Endohydrolysis of the N-glycosidic bond at one specific adenosine on the 28S rRNA.. The A chain is responsible for inhibiting protein synthesis through the catalytic inactivation of 60S ribosomal subunits by removing adenine from position 4,324 of 28S rRNA. The B chain binds to cell receptors and probably facilitates the entry into the cell of the A chain; B chains are also responsible for cell agglutination (lectin activity). Inhibits growth of the human tumor cell line Molt4. The sequence is that of Beta-galactoside-specific lectin 3 from Viscum album (European mistletoe).